We begin with the raw amino-acid sequence, 192 residues long: UPF0301 protein BceJ2315_30870 (192 aa).

It belongs to the UPF0301 (AlgH) family.

This chain is UPF0301 protein BceJ2315_30870, found in Burkholderia cenocepacia (strain ATCC BAA-245 / DSM 16553 / LMG 16656 / NCTC 13227 / J2315 / CF5610) (Burkholderia cepacia (strain J2315)).